The following is a 95-amino-acid chain: Parvalbumin alpha (95 aa).

Ser19 bears the Phosphoserine mark. EF-hand domains are found at residues 34–69 (KNRE…FSAD) and 73–95 (LSDT…KIGA). Ca(2+)-binding residues include Asp47, Asp49, Ser51, Phe53, Glu55, Glu58, Asp86, Asp88, Asp90, and Lys92.

The protein belongs to the parvalbumin family.

Its function is as follows. In muscle, parvalbumin is thought to be involved in relaxation after contraction. It binds two calcium ions. The protein is Parvalbumin alpha (PVALB) of Cavia porcellus (Guinea pig).